The chain runs to 364 residues: Ribosomal RNA large subunit methyltransferase M (364 aa).

S-adenosyl-L-methionine contacts are provided by residues S198, 231 to 234 (APGG), D250, D270, and D286. Catalysis depends on K315, which acts as the Proton acceptor.

Belongs to the class I-like SAM-binding methyltransferase superfamily. RNA methyltransferase RlmE family. RlmM subfamily. Monomer.

The protein localises to the cytoplasm. It catalyses the reaction cytidine(2498) in 23S rRNA + S-adenosyl-L-methionine = 2'-O-methylcytidine(2498) in 23S rRNA + S-adenosyl-L-homocysteine + H(+). Functionally, catalyzes the 2'-O-methylation at nucleotide C2498 in 23S rRNA. The protein is Ribosomal RNA large subunit methyltransferase M of Thauera aminoaromatica.